Reading from the N-terminus, the 227-residue chain is Cytochrome c oxidase subunit 2 (227 aa).

Topologically, residues 1–14 (MAYPFQLGLQDATS) are mitochondrial intermembrane. A helical transmembrane segment spans residues 15 to 45 (PIMEELLHFHDHTLMIVFLISSLVLYIITLM). Residues 46-59 (LTTKLTHTSTMDAQ) lie on the Mitochondrial matrix side of the membrane. Residues 60–87 (EVETVWTILPAIILILIALPSLRILYMM) form a helical membrane-spanning segment. Topologically, residues 88-227 (DEINNPSLTV…YFETWSALMV (140 aa)) are mitochondrial intermembrane. Residues His-161, Cys-196, Glu-198, Cys-200, His-204, and Met-207 each coordinate Cu cation. Residue Glu-198 coordinates Mg(2+). Tyr-218 is modified (phosphotyrosine).

It belongs to the cytochrome c oxidase subunit 2 family. In terms of assembly, component of the cytochrome c oxidase (complex IV, CIV), a multisubunit enzyme composed of 14 subunits. The complex is composed of a catalytic core of 3 subunits MT-CO1, MT-CO2 and MT-CO3, encoded in the mitochondrial DNA, and 11 supernumerary subunits COX4I, COX5A, COX5B, COX6A, COX6B, COX6C, COX7A, COX7B, COX7C, COX8 and NDUFA4, which are encoded in the nuclear genome. The complex exists as a monomer or a dimer and forms supercomplexes (SCs) in the inner mitochondrial membrane with NADH-ubiquinone oxidoreductase (complex I, CI) and ubiquinol-cytochrome c oxidoreductase (cytochrome b-c1 complex, complex III, CIII), resulting in different assemblies (supercomplex SCI(1)III(2)IV(1) and megacomplex MCI(2)III(2)IV(2)). Found in a complex with TMEM177, COA6, COX18, COX20, SCO1 and SCO2. Interacts with TMEM177 in a COX20-dependent manner. Interacts with COX20. Interacts with COX16. Requires Cu cation as cofactor.

Its subcellular location is the mitochondrion inner membrane. It catalyses the reaction 4 Fe(II)-[cytochrome c] + O2 + 8 H(+)(in) = 4 Fe(III)-[cytochrome c] + 2 H2O + 4 H(+)(out). Functionally, component of the cytochrome c oxidase, the last enzyme in the mitochondrial electron transport chain which drives oxidative phosphorylation. The respiratory chain contains 3 multisubunit complexes succinate dehydrogenase (complex II, CII), ubiquinol-cytochrome c oxidoreductase (cytochrome b-c1 complex, complex III, CIII) and cytochrome c oxidase (complex IV, CIV), that cooperate to transfer electrons derived from NADH and succinate to molecular oxygen, creating an electrochemical gradient over the inner membrane that drives transmembrane transport and the ATP synthase. Cytochrome c oxidase is the component of the respiratory chain that catalyzes the reduction of oxygen to water. Electrons originating from reduced cytochrome c in the intermembrane space (IMS) are transferred via the dinuclear copper A center (CU(A)) of subunit 2 and heme A of subunit 1 to the active site in subunit 1, a binuclear center (BNC) formed by heme A3 and copper B (CU(B)). The BNC reduces molecular oxygen to 2 water molecules using 4 electrons from cytochrome c in the IMS and 4 protons from the mitochondrial matrix. This is Cytochrome c oxidase subunit 2 (MT-CO2) from Vulpes macrotis (Kit fox).